The following is a 116-amino-acid chain: Somatostatin (116 aa).

The first 24 residues, 1–24 (MLSCRLQCALAALSIVLALGGVTG), serve as a signal peptide directing secretion. Positions 25 to 88 (APSDPRLRQF…QDEMRLELQR (64 aa)) are excised as a propeptide. Residue Ala43 is modified to Alanine amide. Cysteines 105 and 116 form a disulfide.

This sequence belongs to the somatostatin family. C-terminal amidation of the neuronostatin peptide is required for its biological activity, including for the regulation of mean arterial pressure.

It localises to the secreted. In terms of biological role, inhibits the secretion of pituitary hormones, including that of growth hormone/somatotropin (GH1), PRL, ACTH, luteinizing hormone (LH) and TSH. Also impairs ghrelin- and GnRH-stimulated secretion of GH1 and LH; the inhibition of ghrelin-stimulated secretion of GH1 can be further increased by neuronostatin. Its function is as follows. May enhance low-glucose-induced glucagon release by pancreatic alpha cells. This effect may be mediated by binding to GPR107 and PKA activation. May regulate cardiac contractile function. May compromise cardiomyocyte viability. In the central nervous system, may impair memory retention and may affect hippocampal excitability. May also have anxiolytic and anorexigenic effects. May play a role in arterial pressure regulation. May inhibit basal, but not ghrelin- or GnRH-stimulated secretion of GH1 or LH, but does not affect the release of other pituitary hormones, including PRL, ACTH, FSH or TSH. Potentiates inhibitory action of somatostatin on ghrelin-stimulated secretion of GH1, but not that on GnRH-stimulated secretion of LH. The protein is Somatostatin (SST) of Bos taurus (Bovine).